The chain runs to 260 residues: Thymidylate synthase (260 aa).

R21 lines the dUMP pocket. Residue H51 participates in (6R)-5,10-methylene-5,6,7,8-tetrahydrofolate binding. 122 to 123 (RR) serves as a coordination point for dUMP. The active-site Nucleophile is C142. DUMP contacts are provided by residues 162–165 (RSAD), N173, and 203–205 (HLY). D165 contacts (6R)-5,10-methylene-5,6,7,8-tetrahydrofolate. A259 contacts (6R)-5,10-methylene-5,6,7,8-tetrahydrofolate.

This sequence belongs to the thymidylate synthase family. Bacterial-type ThyA subfamily. In terms of assembly, homodimer.

It is found in the cytoplasm. It carries out the reaction dUMP + (6R)-5,10-methylene-5,6,7,8-tetrahydrofolate = 7,8-dihydrofolate + dTMP. The protein operates within pyrimidine metabolism; dTTP biosynthesis. Functionally, catalyzes the reductive methylation of 2'-deoxyuridine-5'-monophosphate (dUMP) to 2'-deoxythymidine-5'-monophosphate (dTMP) while utilizing 5,10-methylenetetrahydrofolate (mTHF) as the methyl donor and reductant in the reaction, yielding dihydrofolate (DHF) as a by-product. This enzymatic reaction provides an intracellular de novo source of dTMP, an essential precursor for DNA biosynthesis. In Methylococcus capsulatus (strain ATCC 33009 / NCIMB 11132 / Bath), this protein is Thymidylate synthase.